We begin with the raw amino-acid sequence, 255 residues long: ATP-dependent L-serine kinase (255 aa).

Residue E36 is part of the active site. Position 74 (V74) interacts with O-phospho-L-serine. Mg(2+) is bound at residue D75. O-phospho-L-serine contacts are provided by G76, H77, H78, W108, K234, T236, and H238.

Belongs to the SerK family. It depends on Mg(2+) as a cofactor.

The catalysed reaction is L-serine + ATP = O-phospho-L-serine + ADP + H(+). Its function is as follows. Free serine kinase that uses ATP to phosphorylate L-serine to yield O-phospho-L-serine and ADP. In Desulfurococcus mucosus (strain ATCC 35584 / DSM 2162 / JCM 9187 / O7/1), this protein is ATP-dependent L-serine kinase.